The sequence spans 440 residues: Glutamyl-tRNA reductase (440 aa).

Substrate-binding positions include 40–43 (TCNR), S100, 105–107 (ERE), and Q111. C41 functions as the Nucleophile in the catalytic mechanism. Position 181-186 (181-186 (GTGAYA)) interacts with NADP(+).

It belongs to the glutamyl-tRNA reductase family. Homodimer.

The catalysed reaction is (S)-4-amino-5-oxopentanoate + tRNA(Glu) + NADP(+) = L-glutamyl-tRNA(Glu) + NADPH + H(+). The protein operates within porphyrin-containing compound metabolism; protoporphyrin-IX biosynthesis; 5-aminolevulinate from L-glutamyl-tRNA(Glu): step 1/2. Its function is as follows. Catalyzes the NADPH-dependent reduction of glutamyl-tRNA(Glu) to glutamate 1-semialdehyde (GSA). This Renibacterium salmoninarum (strain ATCC 33209 / DSM 20767 / JCM 11484 / NBRC 15589 / NCIMB 2235) protein is Glutamyl-tRNA reductase.